The chain runs to 730 residues: Multifunctional procollagen lysine hydroxylase and glycosyltransferase (730 aa).

The N-terminal stretch at 1–16 (MRVLPFLLPLIPVLLA) is a signal peptide. Residues 20 to 280 (TDLPELVVVT…CGLEVKESEE (261 aa)) are required for glycosyltransferase activity. UDP contacts are provided by residues 30-32 (VAT) and 98-100 (DAY). D98, D101, and H242 together coordinate Mn(2+). 245–248 (GPSK) lines the UDP pocket. C268 and C271 are oxidised to a cystine. The tract at residues 281-507 (VPLIALNLFI…YYGFLIVSDE (227 aa)) is accessory region. Cysteines 554 and 690 form a disulfide. The 2-oxoglutarate site is built by R590 and Y648. The Fe2OG dioxygenase domain maps to 639–730 (ESNMMFVVRY…RYIMVSFINP (92 aa)). Fe cation is bound by residues H659 and D661. The important for dimerization stretch occupies residues 664–707 (TFSIDIALNKKGRDYEGGGVRYIRYNCTVPADEVGYAMMFPGRL). The N-linked (GlcNAc...) asparagine glycan is linked to N689. H711 serves as a coordination point for Fe cation. R721 provides a ligand contact to 2-oxoglutarate.

In terms of assembly, homodimer. Fe(2+) serves as cofactor. It depends on L-ascorbate as a cofactor. Requires Mn(2+) as cofactor.

Its subcellular location is the rough endoplasmic reticulum. The protein localises to the endoplasmic reticulum lumen. The protein resides in the endoplasmic reticulum membrane. It is found in the secreted. It localises to the extracellular space. It catalyses the reaction L-lysyl-[collagen] + 2-oxoglutarate + O2 = (5R)-5-hydroxy-L-lysyl-[collagen] + succinate + CO2. The enzyme catalyses (5R)-5-hydroxy-L-lysyl-[collagen] + UDP-alpha-D-galactose = (5R)-5-O-(beta-D-galactosyl)-5-hydroxy-L-lysyl-[collagen] + UDP + H(+). It carries out the reaction (5R)-5-O-(beta-D-galactosyl)-5-hydroxy-L-lysyl-[collagen] + UDP-alpha-D-glucose = (5R)-5-O-[alpha-D-glucosyl-(1-&gt;2)-beta-D-galactosyl]-5-hydroxy-L-lysyl-[collagen] + UDP + H(+). Its function is as follows. Multifunctional enzyme that catalyzes a series of post-translational modifications on Lys residues in procollagen. Catalyzes the formation of hydroxylysine residues in -Xaa-Lys-Gly- sequences in type IV collagens. Transfers galactose onto hydroxylysine groups, giving rise to galactosyl 5-hydroxylysine. Catalyzes the subsequent transfer of glucose moieties, giving rise to 1,2-glucosylgalactosyl-5-hydroxylysine residues. Essential for normal biosynthesis and secretion of type IV collagens. Essential for normal stability of the basement membrane. The protein is Multifunctional procollagen lysine hydroxylase and glycosyltransferase (let-268) of Caenorhabditis elegans.